The chain runs to 497 residues: Cytochrome P450 3A18 (497 aa).

Cys-442 serves as a coordination point for heme.

The protein belongs to the cytochrome P450 family. Requires heme as cofactor.

It is found in the endoplasmic reticulum membrane. The protein localises to the microsome membrane. The catalysed reaction is an organic molecule + reduced [NADPH--hemoprotein reductase] + O2 = an alcohol + oxidized [NADPH--hemoprotein reductase] + H2O + H(+). In terms of biological role, catalyzes 16-beta- and 6-alpha-hydroxylations of testosterone. In Rattus norvegicus (Rat), this protein is Cytochrome P450 3A18 (Cyp3a18).